The primary structure comprises 197 residues: Histocompatibility antigen 60c (197 aa).

An N-terminal signal peptide occupies residues M1–A17. N-linked (GlcNAc...) asparagine glycosylation is found at N51, N81, and N114. S177 is lipidated: GPI-anchor amidated serine. A propeptide spans M178–L197 (removed in mature form).

The protein belongs to the NKG2D ligand family. As to expression, expressed in skin, and weakly in large intestine.

It localises to the cell membrane. Functionally, ligand for the KLRK1 immunosurveillance receptor. Binding to KLRK1 stimulates cell lysis in vitro. The chain is Histocompatibility antigen 60c from Mus musculus (Mouse).